The sequence spans 488 residues: V-type proton ATPase subunit B 1 (488 aa).

Belongs to the ATPase alpha/beta chains family. As to quaternary structure, V-ATPase is a heteromultimeric enzyme composed of a peripheral catalytic V1 complex (main components: subunits A, B, C, D, E, and F) attached to an integral membrane V0 proton pore complex (main component: the proteolipid protein).

Non-catalytic subunit of the peripheral V1 complex of vacuolar ATPase. V-ATPase is responsible for acidifying a variety of intracellular compartments in eukaryotic cells. The polypeptide is V-type proton ATPase subunit B 1 (Hordeum vulgare (Barley)).